A 575-amino-acid polypeptide reads, in one-letter code: Transcription factor COE2 (575 aa).

An interaction with DNA region spans residues 62–65 (RKSN). The C5-type zinc-finger motif lies at 150-169 (CRVLLTHEVMCSRCCEKKSC). Interaction with DNA stretches follow at residues 196–203 (NCLKTAGN) and 235–238 (NNSK). In terms of domain architecture, IPT/TIG spans 253 to 336 (PCIKAISPSE…KGAPGRFIYT (84 aa)). A compositionally biased stretch (polar residues) spans 441-453 (STQGNNQGYIRNT). Residues 441 to 479 (STQGNNQGYIRNTSSISPRGYSSSSTPQQSNYSTSSNSM) are disordered. Over residues 454-479 (SSISPRGYSSSSTPQQSNYSTSSNSM) the composition is skewed to low complexity.

Belongs to the COE family. Forms either a homodimer or a heterodimer with a related family member. Interacts with SIX1.

Its subcellular location is the nucleus. Its function is as follows. Transcription factor that, in osteoblasts, activates the decoy receptor for RANKL, TNFRSF11B, which in turn regulates osteoclast differentiation. Acts in synergy with the Wnt-responsive LEF1/CTNNB1 pathway. Recognizes variations of the palindromic sequence 5'-ATTCCCNNGGGAATT-3'. The sequence is that of Transcription factor COE2 (EBF2) from Homo sapiens (Human).